Consider the following 169-residue polypeptide: Peptide methionine sulfoxide reductase MsrA (169 aa).

Cys-10 is a catalytic residue.

It belongs to the MsrA Met sulfoxide reductase family.

It carries out the reaction L-methionyl-[protein] + [thioredoxin]-disulfide + H2O = L-methionyl-(S)-S-oxide-[protein] + [thioredoxin]-dithiol. It catalyses the reaction [thioredoxin]-disulfide + L-methionine + H2O = L-methionine (S)-S-oxide + [thioredoxin]-dithiol. Functionally, has an important function as a repair enzyme for proteins that have been inactivated by oxidation. Catalyzes the reversible oxidation-reduction of methionine sulfoxide in proteins to methionine. This chain is Peptide methionine sulfoxide reductase MsrA, found in Streptococcus equi subsp. equi (strain 4047).